The sequence spans 504 residues: Probable alpha-L-arabinofuranosidase C (504 aa).

Residues Asn152, Asn181, Asn269, and Asn467 are each glycosylated (N-linked (GlcNAc...) asparagine).

Belongs to the glycosyl hydrolase 51 family.

It is found in the secreted. It catalyses the reaction Hydrolysis of terminal non-reducing alpha-L-arabinofuranoside residues in alpha-L-arabinosides.. The protein operates within glycan metabolism; L-arabinan degradation. Its function is as follows. Alpha-L-arabinofuranosidase involved in the degradation of arabinoxylan, a major component of plant hemicellulose. Acts only on small linear 1,5-alpha-linked L-arabinofuranosyl oligosaccharides. This chain is Probable alpha-L-arabinofuranosidase C (abfC), found in Aspergillus terreus (strain NIH 2624 / FGSC A1156).